The primary structure comprises 258 residues: Ribonuclease PH (258 aa).

Residues Arg-88 and 126–128 (GTR) contribute to the phosphate site.

Belongs to the RNase PH family. Homohexameric ring arranged as a trimer of dimers.

It carries out the reaction tRNA(n+1) + phosphate = tRNA(n) + a ribonucleoside 5'-diphosphate. In terms of biological role, phosphorolytic 3'-5' exoribonuclease that plays an important role in tRNA 3'-end maturation. Removes nucleotide residues following the 3'-CCA terminus of tRNAs; can also add nucleotides to the ends of RNA molecules by using nucleoside diphosphates as substrates, but this may not be physiologically important. Probably plays a role in initiation of 16S rRNA degradation (leading to ribosome degradation) during starvation. In Mycobacteroides abscessus (strain ATCC 19977 / DSM 44196 / CCUG 20993 / CIP 104536 / JCM 13569 / NCTC 13031 / TMC 1543 / L948) (Mycobacterium abscessus), this protein is Ribonuclease PH.